We begin with the raw amino-acid sequence, 192 residues long: PTS-dependent dihydroxyacetone kinase, ADP-binding subunit DhaL (192 aa).

Residues 5–189 enclose the DhaL domain; the sequence is DTTIEWLGKF…SAYLFETLLE (185 aa). 3 residues coordinate Mg(2+): D29, D34, and D36. Residues 37–40, 78–79, G115, M124, R161, and 174–176 each bind ADP; these read HGAN, AS, and DPG.

As to quaternary structure, homodimer. The dihydroxyacetone kinase complex is composed of a homodimer of DhaM, a homodimer of DhaK and the subunit DhaL. It depends on Mg(2+) as a cofactor.

The protein localises to the cytoplasm. It carries out the reaction dihydroxyacetone + phosphoenolpyruvate = dihydroxyacetone phosphate + pyruvate. Its pathway is polyol metabolism; glycerol degradation. Functionally, ADP-binding subunit of the dihydroxyacetone kinase, which is responsible for the phosphoenolpyruvate (PEP)-dependent phosphorylation of dihydroxyacetone. DhaL-ADP is converted to DhaL-ATP via a phosphoryl group transfer from DhaM and transmits it to dihydroxyacetone binds to DhaK. The chain is PTS-dependent dihydroxyacetone kinase, ADP-binding subunit DhaL from Lactococcus lactis subsp. lactis (strain IL1403) (Streptococcus lactis).